The primary structure comprises 866 residues: Pentatricopeptide repeat-containing protein At1g15510, chloroplastic (866 aa).

The N-terminal 52 residues, 1 to 52 (MASSAQSPHFYLNPGKSNSFQSKAYKQRNVNFYWNFGIRRLFLRKSQGLSVL), are a transit peptide targeting the chloroplast. PPR repeat units follow at residues 58-92 (STHFSNSQLHGLCANGKLEEAMKLLNSMQELRVAV), 93-123 (DEDVFVALVRLCEWKRAQEEGSKVYSIALSS), 128-158 (GVELGNAFLAMFVRFGNLVDAWYVFGKMSER), 159-194 (NLFSWNVLVGGYAKQGYFDEAMCLYHRMLWVGGVKP), 195-229 (DVYTFPCVLRTCGGIPDLARGKEVHVHVVRYGYEL), 230-260 (DIDVVNALITMYVKCGDVKSARLLFDRMPRR), 261-295 (DIISWNAMISGYFENGMCHEGLELFFAMRGLSVDP), 296-330 (DLMTLTSVISACELLGDRRLGRDIHAYVITTGFAV), 331-365 (DISVCNSLTQMYLNAGSWREAEKLFSRMERKDIVS), 366-396 (WTTMISGYEYNFLPDKAIDTYRMMDQDSVKP), 397-431 (DEITVAAVLSACATLGDLDTGVELHKLAIKARLIS), 432-466 (YVIVANNLINMYSKCKCIDKALDIFHNIPRKNVIS), 467-493 (WTSIIAGLRLNNRCFEALIFLRQMKMT), 497-531 (NAITLTAALAACARIGALMCGKEIHAHVLRTGVGL), 532-561 (DDFLPNALLDMYVRCGRMNTAWSQFNSQKK), 562-596 (DVTSWNILLTGYSERGQGSMVVELFDRMVKSRVRP), 597-631 (DEITFISLLCGCSKSQMVRQGLMYFSKMEDYGVTP), and 632-662 (NLKHYACVVDLLGRAGELQEAHKFIQKMPVT). Residues 667 to 742 (VWGALLNACR…DAGCSWVEVK (76 aa)) form a type E motif region. The segment at 743 to 773 (GKVHAFLSDDKYHPQTKEINTVLEGFYEKMS) is type E(+) motif. The segment at 774–866 (EVGLTKISES…FKDGECSCGD (93 aa)) is type DYW motif.

The protein belongs to the PPR family. PCMP-H subfamily.

Its subcellular location is the plastid. It is found in the chloroplast. Functionally, regulates the RNA editing of the chloroplast transcript accD, and is essential for the early stages of chloroplast biogenesis. Required for the RNA editing of the chloroplast transcript ndhF. This Arabidopsis thaliana (Mouse-ear cress) protein is Pentatricopeptide repeat-containing protein At1g15510, chloroplastic (PCMP-H73).